Reading from the N-terminus, the 952-residue chain is Histone deacetylase 7 (952 aa).

Transcription repression regions lie at residues 1–268 (MDLR…DSDR) and 218–546 (GPNP…EHAG). The tract at residues 49 to 149 (SMDTPMPELQ…LPSDPPEHFP (101 aa)) is interaction with MEF2A. Serine 109 carries the phosphoserine modification. 2 disordered regions span residues 130 to 224 (LSSF…PILG) and 261 to 283 (PARA…ILGS). The residue at position 155 (serine 155) is a Phosphoserine; by MARK2, MARK3 and PKD/PRKD1. Basic and acidic residues predominate over residues 167–181 (KSLERRKNPLLRKES). Serine 181 carries the post-translational modification Phosphoserine; by PKD/PRKD2. Low complexity predominate over residues 197–212 (SSPSSSSTPASGCSSP). Serine 283 carries the phosphoserine modification. Threonine 286 carries the post-translational modification Phosphothreonine. 3 disordered regions span residues 349–377 (LHWP…MQPR), 389–441 (KRSA…GPAP), and 460–510 (LPRG…SSSE). A Phosphoserine; by PKD/PRKD1 modification is found at serine 358. The span at 360-374 (PLPPSATAPPPPGPM) shows a compositional bias: pro residues. Phosphoserine occurs at positions 364, 405, 486, 487, and 507. A compositionally biased stretch (low complexity) spans 482–503 (SRAQSSPAAPASLSAPEPASQA). Positions 512-865 (PARTLPFTTG…VAALLGNRVD (354 aa)) are histone deacetylase. Zn(2+)-binding residues include cysteine 533, cysteine 535, and histidine 541. Serine 595 carries the phosphoserine modification. Residue cysteine 618 participates in Zn(2+) binding. Histidine 670 is a catalytic residue. Residues 877–952 (NLNAIRSLEA…LVEEEEPMNL (76 aa)) are interaction with SIN3A. The Nuclear export signal motif lies at 917–952 (KEEVEAVTALASLSVGILAEDRPSEQLVEEEEPMNL).

Belongs to the histone deacetylase family. HD type 2 subfamily. As to quaternary structure, interacts with HDAC1, HDAC2, HDAC3, HDAC4, HDAC5, NCOR1, NCOR2, SIN3A, SIN3B, RBBP4, RBBP7, MTA1L1, SAP30 and MBD3. Interacts with KAT5 and EDNRA. Interacts with the 14-3-3 protein YWHAE, MEF2A, MEF2B and MEF2C. Interacts with ZMYND15. Interacts with KDM5B. Interacts with PML. Interacts with FOXP3. Interacts with RARA. In terms of processing, may be phosphorylated by CaMK1. Phosphorylated by the PKC kinases PKN1 and PKN2, impairing nuclear import. Phosphorylation at Ser-155 by MARK2, MARK3 and PRKD1 promotes interaction with 14-3-3 proteins and export from the nucleus. Phosphorylation at Ser-155 is a prerequisite for phosphorylation at Ser-181.

The protein localises to the nucleus. Its subcellular location is the cytoplasm. It carries out the reaction N(6)-acetyl-L-lysyl-[histone] + H2O = L-lysyl-[histone] + acetate. The enzyme catalyses N(6)-acetyl-L-lysyl-[protein] + H2O = L-lysyl-[protein] + acetate. Responsible for the deacetylation of lysine residues on the N-terminal part of the core histones (H2A, H2B, H3 and H4). Histone deacetylation gives a tag for epigenetic repression and plays an important role in transcriptional regulation, cell cycle progression and developmental events. Histone deacetylases act via the formation of large multiprotein complexes. Involved in muscle maturation by repressing transcription of myocyte enhancer factors such as MEF2A, MEF2B and MEF2C. During muscle differentiation, it shuttles into the cytoplasm, allowing the expression of myocyte enhancer factors. May be involved in Epstein-Barr virus (EBV) latency, possibly by repressing the viral BZLF1 gene. Positively regulates the transcriptional repressor activity of FOXP3. Serves as a corepressor of RARA, causing its deacetylation and inhibition of RARE DNA element binding. In association with RARA, plays a role in the repression of microRNA-10a and thereby in the inflammatory response. Also acetylates non-histone proteins, such as ALKBH5. This chain is Histone deacetylase 7 (HDAC7), found in Homo sapiens (Human).